Reading from the N-terminus, the 350-residue chain is Heat-inducible transcription repressor HrcA (350 aa).

The protein belongs to the HrcA family.

In terms of biological role, negative regulator of class I heat shock genes (grpE-dnaK-dnaJ and groELS operons). Prevents heat-shock induction of these operons. This chain is Heat-inducible transcription repressor HrcA, found in Xanthomonas axonopodis pv. citri (strain 306).